Here is a 347-residue protein sequence, read N- to C-terminus: MKIAVDAMGGDNAPEEIVKGVSEARKALPDVEFILYGKKDEIAKYMDDFRNVKVVHTDEVITMEDEPVKAVRRKKNSSMILAAQAVKNGDADAIFSAGNTGALLAAGLFIIGRIKGLDRPGMTTTLPSLKGENDNFTMLDVGANAESKAKNLHDFAILGNFYGTNVMHVTNPRIALLNNGTEYDKGDKIHKEAYQLLKNDSSLNFVGNIESRELLNGTADVVVTDGFTGNAVLKNIEGTALSMLKLVKETIMNNGVKGKMGGLLLKSAFSQIKDQMDYSKQGGAVLLGVKAPVVKAHGSSNANQVKNALVQVHEIVDSKLVKNLADYFEMHLESIKQDDVDKENENN.

This sequence belongs to the PlsX family. As to quaternary structure, homodimer. Probably interacts with PlsY.

It localises to the cytoplasm. The catalysed reaction is a fatty acyl-[ACP] + phosphate = an acyl phosphate + holo-[ACP]. The protein operates within lipid metabolism; phospholipid metabolism. In terms of biological role, catalyzes the reversible formation of acyl-phosphate (acyl-PO(4)) from acyl-[acyl-carrier-protein] (acyl-ACP). This enzyme utilizes acyl-ACP as fatty acyl donor, but not acyl-CoA. This chain is Phosphate acyltransferase, found in Pediococcus pentosaceus (strain ATCC 25745 / CCUG 21536 / LMG 10740 / 183-1w).